The following is a 141-amino-acid chain: Plasmatocyte-spreading peptide (141 aa).

Residues 1-22 form the signal peptide; sequence MKLTINILFCLILISQYNSANG. Residues 23 to 118 constitute a propeptide that is removed on maturation; that stretch reads NLRDLFNNVR…ATGGKDDKGR (96 aa). A compositionally biased stretch (basic and acidic residues) spans 46–58; it reads VKTLFHPSDKSGN. Positions 46-118 are disordered; that stretch reads VKTLFHPSDK…ATGGKDDKGR (73 aa). Residues 83–98 show a composition bias toward low complexity; that stretch reads PVAVTPAPVVSTTTQA. A compositionally biased stretch (polar residues) spans 99-108; the sequence is SAPTVATNGT. Cysteine 125 and cysteine 137 are disulfide-bonded.

Belongs to the GBP/PSP1/paralytic peptide family.

In terms of biological role, mediates the spreading of plasmatocytes to foreign surfaces. Plasmocytes are a class of hemocytes involved in insect cellular immunity. This is Plasmatocyte-spreading peptide (PSP1) from Chrysodeixis includens (Soybean looper).